The chain runs to 30 residues: Photosystem I reaction center subunit XII (30 aa).

A helical membrane pass occupies residues 7 to 29; the sequence is VYIALMAALLASVLAIRLGATLY.

The protein belongs to the PsaM family.

It is found in the plastid. It localises to the chloroplast thylakoid membrane. This Thalassiosira pseudonana (Marine diatom) protein is Photosystem I reaction center subunit XII.